The sequence spans 139 residues: uncharacterized protein (139 aa).

This is an uncharacterized protein from Dictyostelium discoideum (Social amoeba).